Reading from the N-terminus, the 335-residue chain is MLLIGVAGTELTAQERDWLQHDAVAGVVLFKRNFASRQQVTDLSAAIRAAAPRPQLICVDQEGGRVQRFREGYSDLPPLQDIGALYATDPQQALALAERHAWLMASEVRASGLDLSFAPVVDLGRGNRAIGNRAFSEDPQVVAAFTAAYVRGMHSVGMAATLKHFPGHGTVLEDTHVDTAIDPRALDELRAQDLVPFQAGIAAGADAVMMAHVIYPQIAPEPAGYSPRWIQDILRGELGFRGVVFSDDIGMAASHSAGGVPARVHAHLDAGCDVVLVCHPELVDEALHAVQGRSLNTAALLGLIGRGALGWDGLLADARHGDTQTRLLETLGRTV.

Residues D60, R68, R133, and 163-164 (KH) contribute to the substrate site. The active-site Proton donor/acceptor is the H176. The Nucleophile role is filled by D247.

Belongs to the glycosyl hydrolase 3 family. NagZ subfamily.

It is found in the cytoplasm. The catalysed reaction is Hydrolysis of terminal non-reducing N-acetyl-D-hexosamine residues in N-acetyl-beta-D-hexosaminides.. The protein operates within cell wall biogenesis; peptidoglycan recycling. Its function is as follows. Plays a role in peptidoglycan recycling by cleaving the terminal beta-1,4-linked N-acetylglucosamine (GlcNAc) from peptide-linked peptidoglycan fragments, giving rise to free GlcNAc, anhydro-N-acetylmuramic acid and anhydro-N-acetylmuramic acid-linked peptides. This Stenotrophomonas maltophilia (strain K279a) protein is Beta-hexosaminidase.